Here is a 264-residue protein sequence, read N- to C-terminus: uncharacterized protein (264 aa).

The next 4 helical transmembrane spans lie at 43–63 (VVAAACTLPADSLFAVMLYLI), 68–88 (FLPSTLFIVNFSLVLLALLGI), 96–116 (ILPALVWKCVLLLFLLFLGCI), and 150–170 (LAAKYPMLPFIAVACTIVLAV). Residues 216 to 247 (SYEDALKNSSQQPSTSSSSSSPPSRPPHSVYT) form a disordered region. The span at 224–237 (SSQQPSTSSSSSSP) shows a compositional bias: low complexity.

The protein resides in the membrane. This is an uncharacterized protein from Caenorhabditis elegans.